A 315-amino-acid chain; its full sequence is Aspartate carbamoyltransferase catalytic subunit (315 aa).

Residues Arg64 and Thr65 each coordinate carbamoyl phosphate. Lys93 serves as a coordination point for L-aspartate. Carbamoyl phosphate is bound by residues Arg114, His142, and Gln145. 2 residues coordinate L-aspartate: Arg175 and Arg237. Carbamoyl phosphate-binding residues include Leu276 and Pro277.

It belongs to the aspartate/ornithine carbamoyltransferase superfamily. ATCase family. Heterooligomer of catalytic and regulatory chains.

It carries out the reaction carbamoyl phosphate + L-aspartate = N-carbamoyl-L-aspartate + phosphate + H(+). Its pathway is pyrimidine metabolism; UMP biosynthesis via de novo pathway; (S)-dihydroorotate from bicarbonate: step 2/3. In terms of biological role, catalyzes the condensation of carbamoyl phosphate and aspartate to form carbamoyl aspartate and inorganic phosphate, the committed step in the de novo pyrimidine nucleotide biosynthesis pathway. This Thermofilum pendens (strain DSM 2475 / Hrk 5) protein is Aspartate carbamoyltransferase catalytic subunit.